Reading from the N-terminus, the 351-residue chain is tRNA-splicing endonuclease (351 aa).

Catalysis depends on residues tyrosine 287, histidine 298, and lysine 329.

Belongs to the tRNA-intron endonuclease family. Archaeal long subfamily. As to quaternary structure, homodimer.

The catalysed reaction is pretRNA = a 3'-half-tRNA molecule with a 5'-OH end + a 5'-half-tRNA molecule with a 2',3'-cyclic phosphate end + an intron with a 2',3'-cyclic phosphate and a 5'-hydroxyl terminus.. Endonuclease that removes tRNA introns. Cleaves pre-tRNA at the 5'- and 3'-splice sites to release the intron. The products are an intron and two tRNA half-molecules bearing 2',3' cyclic phosphate and 5'-OH termini. Recognizes a pseudosymmetric substrate in which 2 bulged loops of 3 bases are separated by a stem of 4 bp. This Methanococcoides burtonii (strain DSM 6242 / NBRC 107633 / OCM 468 / ACE-M) protein is tRNA-splicing endonuclease.